We begin with the raw amino-acid sequence, 115 residues long: Ig kappa chain V region 3315 (115 aa).

The framework-1 stretch occupies residues 1-24 (AQIVMTQTPSSVSAAVGGTVTINC). The interval 25–37 (QSSQSVYENGRLS) is complementarity-determining-1. Residues 38-52 (WFQQKPGQPPKRLIY) form a framework-2 region. Positions 53-59 (RASTLAS) are complementarity-determining-2. The interval 60–91 (GVSSRFTGSGSGTQFTLSISDVQCDDAATYYC) is framework-3. The interval 92-104 (LGNYDCSSGDSFT) is complementarity-determining-3. The framework-4 stretch occupies residues 105–114 (FGGGTEVVVK).

The protein is Ig kappa chain V region 3315 of Oryctolagus cuniculus (Rabbit).